The sequence spans 142 residues: Large ribosomal subunit protein uL11 (142 aa).

It belongs to the universal ribosomal protein uL11 family. In terms of assembly, part of the ribosomal stalk of the 50S ribosomal subunit. Interacts with L10 and the large rRNA to form the base of the stalk. L10 forms an elongated spine to which L12 dimers bind in a sequential fashion forming a multimeric L10(L12)X complex. In terms of processing, one or more lysine residues are methylated.

Forms part of the ribosomal stalk which helps the ribosome interact with GTP-bound translation factors. This Bartonella quintana (strain Toulouse) (Rochalimaea quintana) protein is Large ribosomal subunit protein uL11.